We begin with the raw amino-acid sequence, 263 residues long: H-2 class II histocompatibility antigen, A-S beta chain (263 aa).

Residues 1-27 (MALQIPSLLLSAAVVVLMVLSSPGTEG) form the signal peptide. The segment at 28–120 (GDSERHFVFQ…VETHTSLRRL (93 aa)) is beta-1. At 28–224 (GDSERHFVFQ…RAQSESARSK (197 aa)) the chain is on the extracellular side. Disulfide bonds link Cys-42–Cys-104 and Cys-143–Cys-199. N-linked (GlcNAc...) asparagine glycosylation is present at Asn-46. The segment at 121–214 (EQPNVVISLS…SLKSPITVEW (94 aa)) is beta-2. In terms of domain architecture, Ig-like C1-type spans 123-211 (PNVVISLSRT…EHPSLKSPIT (89 aa)). The segment at 215–224 (RAQSESARSK) is connecting peptide. Residues 225–245 (MLSGIGGCVLGVIFLGLGLFI) form a helical membrane-spanning segment. Over 246 to 263 (RHRSQKGPRGPPPAGLLQ) the chain is Cytoplasmic.

It belongs to the MHC class II family. Ubiquitinated in immature dendritic cells leading to down-regulation of MHC class II.

It localises to the membrane. This Mus musculus (Mouse) protein is H-2 class II histocompatibility antigen, A-S beta chain (H2-Ab1).